Here is a 215-residue protein sequence, read N- to C-terminus: Redox-sensing transcriptional repressor Rex (215 aa).

Positions 18–57 form a DNA-binding region, H-T-H motif; it reads LYYRFLKNLHASGKQRVSSAELSDAVKVDSATIRRDFSYF. 92 to 97 contributes to the NAD(+) binding site; sequence GVGNLG.

This sequence belongs to the transcriptional regulatory Rex family. In terms of assembly, homodimer.

Its subcellular location is the cytoplasm. Modulates transcription in response to changes in cellular NADH/NAD(+) redox state. The chain is Redox-sensing transcriptional repressor Rex from Bacillus licheniformis (strain ATCC 14580 / DSM 13 / JCM 2505 / CCUG 7422 / NBRC 12200 / NCIMB 9375 / NCTC 10341 / NRRL NRS-1264 / Gibson 46).